The sequence spans 534 residues: Kelch repeat and BTB domain-containing protein 4 (534 aa).

A BTB domain is found at 61–128 (ADVTISVEGR…IYHGTVKLRA (68 aa)). The BACK domain occupies 163-255 (CLQVMWLADR…SLKEIGENVH (93 aa)). 5 Kelch repeats span residues 255–301 (HIYL…KHGG), 302–344 (DLYV…SVPG), 347–394 (AIYS…NLNG), 396–446 (IYLL…VHKD), and 448–497 (VFIV…VFRD).

In terms of assembly, component of the BCR(KBTBD4) E3 ubiquitin ligase complex, at least composed of CUL3, KBTBD4 and RBX1.

Its function is as follows. Substrate-specific adapter of a BCR (BTB-CUL3-RBX1) E3 ubiquitin ligase complex which targets CoREST corepressor complex components RCOR1, KDM1A/LSD1 and HDAC2 for proteasomal degradation. RCOR1 is likely to be the primary target while degradation of KDM1A and HDAC2 is likely due to their association with RCOR1. Also targets RCOR3, MIER2 and MIER3 for proteasomal degradation as well as associated proteins ZNF217 and RREB1. Degradation is dependent on the presence of an ELM2 domain in the target proteins. This chain is Kelch repeat and BTB domain-containing protein 4 (Kbtbd4), found in Mus musculus (Mouse).